The chain runs to 953 residues: Translation initiation factor IF-2 (953 aa).

Disordered regions lie at residues 52–247 (KASK…LAEL) and 279–363 (TKLK…TERK). 3 stretches are compositionally biased toward basic and acidic residues: residues 80-89 (TGSEHVEKTQ), 98-111 (FKAEREARAKEQAA), and 140-188 (QGDK…ENHK). Over residues 191–207 (RFTNQKKQGRQEPQSKS) the composition is skewed to polar residues. Residues 229–247 (RQSETRFRAQQEAKRLAEL) show a composition bias toward basic and acidic residues. Residues 282–291 (KSSNISAKST) are compositionally biased toward polar residues. Residues 300-317 (ARPEKNRELTHHSQEGQK) are compositionally biased toward basic and acidic residues. Residues 322–338 (SWNSQNQVRNQKNSNWN) show a composition bias toward low complexity. Basic residues predominate over residues 339–348 (KNKKTKKGKN). Residues 454-623 (ERAPVVTIMG…LLVAEVEELK (170 aa)) enclose the tr-type G domain. A G1 region spans residues 463 to 470 (GHVDHGKT). 463-470 (GHVDHGKT) lines the GTP pocket. Positions 488-492 (GITQH) are G2. The tract at residues 509–512 (DTPG) is G3. Residues 509–513 (DTPGH) and 563–566 (NKID) contribute to the GTP site. A G4 region spans residues 563-566 (NKID). Positions 599–601 (SAK) are G5.

The protein belongs to the TRAFAC class translation factor GTPase superfamily. Classic translation factor GTPase family. IF-2 subfamily.

Its subcellular location is the cytoplasm. Functionally, one of the essential components for the initiation of protein synthesis. Protects formylmethionyl-tRNA from spontaneous hydrolysis and promotes its binding to the 30S ribosomal subunits. Also involved in the hydrolysis of GTP during the formation of the 70S ribosomal complex. The sequence is that of Translation initiation factor IF-2 from Streptococcus pyogenes serotype M5 (strain Manfredo).